We begin with the raw amino-acid sequence, 372 residues long: Queuine tRNA-ribosyltransferase (372 aa).

Asp-92 functions as the Proton acceptor in the catalytic mechanism. Residues 92–96, Asp-146, Gln-188, and Gly-215 contribute to the substrate site; that span reads DSGGF. The RNA binding stretch occupies residues 246 to 252; sequence GIGTLRE. Catalysis depends on Asp-265, which acts as the Nucleophile. The interval 270-274 is RNA binding; important for wobble base 34 recognition; that stretch reads TRLGR. Zn(2+) is bound by residues Cys-303, Cys-305, Cys-308, and His-334.

This sequence belongs to the queuine tRNA-ribosyltransferase family. Homodimer. Within each dimer, one monomer is responsible for RNA recognition and catalysis, while the other monomer binds to the replacement base PreQ1. It depends on Zn(2+) as a cofactor.

The enzyme catalyses 7-aminomethyl-7-carbaguanine + guanosine(34) in tRNA = 7-aminomethyl-7-carbaguanosine(34) in tRNA + guanine. It functions in the pathway tRNA modification; tRNA-queuosine biosynthesis. Its function is as follows. Catalyzes the base-exchange of a guanine (G) residue with the queuine precursor 7-aminomethyl-7-deazaguanine (PreQ1) at position 34 (anticodon wobble position) in tRNAs with GU(N) anticodons (tRNA-Asp, -Asn, -His and -Tyr). Catalysis occurs through a double-displacement mechanism. The nucleophile active site attacks the C1' of nucleotide 34 to detach the guanine base from the RNA, forming a covalent enzyme-RNA intermediate. The proton acceptor active site deprotonates the incoming PreQ1, allowing a nucleophilic attack on the C1' of the ribose to form the product. After dissociation, two additional enzymatic reactions on the tRNA convert PreQ1 to queuine (Q), resulting in the hypermodified nucleoside queuosine (7-(((4,5-cis-dihydroxy-2-cyclopenten-1-yl)amino)methyl)-7-deazaguanosine). The chain is Queuine tRNA-ribosyltransferase from Synechococcus sp. (strain CC9902).